Reading from the N-terminus, the 516-residue chain is GMP synthase [glutamine-hydrolyzing] (516 aa).

Positions 8–198 constitute a Glutamine amidotransferase type-1 domain; it reads KILILDFGSQ…VVNICGCDTL (191 aa). The Nucleophile role is filled by C84. Active-site residues include H172 and E174. Residues 199–391 form the GMPS ATP-PPase domain; it reads WNIENIIEND…LGLPYNMLYR (193 aa). 226–232 lines the ATP pocket; the sequence is SGGVDSS.

As to quaternary structure, homodimer.

The enzyme catalyses XMP + L-glutamine + ATP + H2O = GMP + L-glutamate + AMP + diphosphate + 2 H(+). Its pathway is purine metabolism; GMP biosynthesis; GMP from XMP (L-Gln route): step 1/1. In terms of biological role, catalyzes the synthesis of GMP from XMP. The sequence is that of GMP synthase [glutamine-hydrolyzing] from Francisella tularensis subsp. holarctica (strain FTNF002-00 / FTA).